We begin with the raw amino-acid sequence, 432 residues long: 5'-deoxyadenosine deaminase (432 aa).

Zn(2+)-binding residues include H63 and H65. Substrate contacts are provided by E92 and H184. H211 lines the Zn(2+) pocket. Substrate-binding residues include E214 and D299. D299 serves as a coordination point for Zn(2+).

The protein belongs to the metallo-dependent hydrolases superfamily. MTA/SAH deaminase family. In terms of assembly, homotetramer. It depends on Zn(2+) as a cofactor.

The catalysed reaction is 5'-deoxyadenosine + H2O + H(+) = 5'-deoxyinosine + NH4(+). It catalyses the reaction S-adenosyl-L-homocysteine + H2O + H(+) = S-inosyl-L-homocysteine + NH4(+). It carries out the reaction S-methyl-5'-thioadenosine + H2O + H(+) = S-methyl-5'-thioinosine + NH4(+). The enzyme catalyses adenosine + H2O + H(+) = inosine + NH4(+). It participates in amino-acid biosynthesis; S-adenosyl-L-methionine biosynthesis. Its function is as follows. Catalyzes the deamination of three SAM-derived enzymatic products, namely 5'-deoxyadenosine, S-adenosyl-L-homocysteine, and 5'-methylthioadenosine, to produce the inosine analogs. Can also deaminate adenosine. The preferred substrate for this enzyme is 5'-deoxyadenosine, but all these substrates are efficiently deaminated. Likely functions in a S-adenosyl-L-methionine (SAM) recycling pathway from S-adenosyl-L-homocysteine (SAH) produced from SAM-dependent methylation reactions. May also be involved in the recycling of 5'-deoxyadenosine, whereupon the 5'-deoxyribose moiety of 5'-deoxyinosine is further metabolized to deoxyhexoses used for the biosynthesis of aromatic amino acids in methanogens. The chain is 5'-deoxyadenosine deaminase from Methanosarcina acetivorans (strain ATCC 35395 / DSM 2834 / JCM 12185 / C2A).